Consider the following 499-residue polypeptide: Lanosterol 14-alpha demethylase (499 aa).

A helical transmembrane segment spans residues Ser-13–Gly-35. A heme-binding site is contributed by Cys-441.

This sequence belongs to the cytochrome P450 family. Heme is required as a cofactor. Strongly expressed in intestine. Moderately expressed in liver, with higher levels in females compared to males. Also detected at low levels in brain, eye, kidney and testis.

It is found in the endoplasmic reticulum membrane. It localises to the membrane. It carries out the reaction a 14alpha-methyl steroid + 3 reduced [NADPH--hemoprotein reductase] + 3 O2 = a Delta(14) steroid + formate + 3 oxidized [NADPH--hemoprotein reductase] + 4 H2O + 4 H(+). It catalyses the reaction lanosterol + 3 reduced [NADPH--hemoprotein reductase] + 3 O2 = 4,4-dimethyl-5alpha-cholesta-8,14,24-trien-3beta-ol + formate + 3 oxidized [NADPH--hemoprotein reductase] + 4 H2O + 4 H(+). The catalysed reaction is 24,25-dihydrolanosterol + 3 reduced [NADPH--hemoprotein reductase] + 3 O2 = 4,4-dimethyl-8,14-cholestadien-3beta-ol + formate + 3 oxidized [NADPH--hemoprotein reductase] + 4 H2O + 4 H(+). The enzyme catalyses a 14alpha-methyl steroid + reduced [NADPH--hemoprotein reductase] + O2 = a 14alpha-hydroxymethyl steroid + oxidized [NADPH--hemoprotein reductase] + H2O + H(+). It carries out the reaction a 14alpha-hydroxymethyl steroid + reduced [NADPH--hemoprotein reductase] + O2 = a 14alpha-formyl steroid + oxidized [NADPH--hemoprotein reductase] + 2 H2O + H(+). It catalyses the reaction a 14alpha-formyl steroid + reduced [NADPH--hemoprotein reductase] + O2 = a Delta(14) steroid + formate + oxidized [NADPH--hemoprotein reductase] + H2O + 2 H(+). The catalysed reaction is lanosterol + reduced [NADPH--hemoprotein reductase] + O2 = 32-hydroxylanosterol + oxidized [NADPH--hemoprotein reductase] + H2O + H(+). The enzyme catalyses 32-hydroxylanosterol + reduced [NADPH--hemoprotein reductase] + O2 = 32-oxolanosterol + oxidized [NADPH--hemoprotein reductase] + 2 H2O + H(+). It carries out the reaction 32-oxolanosterol + reduced [NADPH--hemoprotein reductase] + O2 = 4,4-dimethyl-5alpha-cholesta-8,14,24-trien-3beta-ol + formate + oxidized [NADPH--hemoprotein reductase] + H2O + 2 H(+). It catalyses the reaction 24,25-dihydrolanosterol + reduced [NADPH--hemoprotein reductase] + O2 = 32-hydroxy-24,25-dihydrolanosterol + oxidized [NADPH--hemoprotein reductase] + H2O + H(+). The catalysed reaction is 32-hydroxy-24,25-dihydrolanosterol + reduced [NADPH--hemoprotein reductase] + O2 = 32-oxo-24,25-dihydrolanosterol + oxidized [NADPH--hemoprotein reductase] + 2 H2O + H(+). The enzyme catalyses 32-oxo-24,25-dihydrolanosterol + reduced [NADPH--hemoprotein reductase] + O2 = 4,4-dimethyl-8,14-cholestadien-3beta-ol + formate + oxidized [NADPH--hemoprotein reductase] + H2O + 2 H(+). Its pathway is steroid biosynthesis; zymosterol biosynthesis; zymosterol from lanosterol: step 1/6. Inhibited by ketoconazole. May also be inhibited to a lesser extent by propiconazole. In terms of biological role, sterol 14alpha-demethylase that plays a critical role in the cholesterol biosynthesis pathway, being cholesterol the major sterol component in deuterostome membranes as well as a precursor for steroid hormone synthesis. Cytochrome P450 monooxygenase that catalyzes the three-step oxidative removal of the 14alpha-methyl group (C-32) of sterols such as lanosterol (lanosta-8,24-dien-3beta-ol) and 24,25-dihydrolanosterol (DHL) in the form of formate, and converts the sterols to 4,4-dimethyl-5alpha-cholesta-8,14,24-trien-3beta-ol and 4,4-dimethyl-8,14-cholestadien-3beta-ol, respectively, which are intermediates of cholesterol biosynthesis. Can also demethylate substrates not intrinsic to deuterostomes, such as eburicol (24-methylene-24,25-dihydrolanosterol), but at a lower rate than DHL. In Danio rerio (Zebrafish), this protein is Lanosterol 14-alpha demethylase.